Here is a 266-residue protein sequence, read N- to C-terminus: MSGTGRQFRVARAVISPQHPGMIRDKEKPAPTKPGKGVIAVAPPSFRRERALLKRGVWPVAGCDEAGRGPLAGPVVAAAVVLDPKRIPKGLDDSKRLTADKREQLFEQICATAAFAVAYASPARIDRDNILRASLWALAKAVHALPEMPRHVFVDGRDKIATSCDCDAVIGGDGLVLSIAAASIIAKVSRDRLMCRLAEDCPGYGFENHKGYGVPEHLAALDRLGPSKHHRRLFAPVVAARQKHQPETATVPAVAADLFEFGAPPV.

The interval 19 to 38 (HPGMIRDKEKPAPTKPGKGV) is disordered. One can recognise an RNase H type-2 domain in the interval 58–246 (WPVAGCDEAG…VVAARQKHQP (189 aa)). The a divalent metal cation site is built by Asp-64, Glu-65, and Asp-155.

This sequence belongs to the RNase HII family. Mn(2+) serves as cofactor. The cofactor is Mg(2+).

The protein resides in the cytoplasm. The catalysed reaction is Endonucleolytic cleavage to 5'-phosphomonoester.. Its function is as follows. Endonuclease that specifically degrades the RNA of RNA-DNA hybrids. This chain is Ribonuclease HII, found in Rhodopseudomonas palustris (strain BisB18).